Reading from the N-terminus, the 774-residue chain is Ras and Rab interactor 1 (774 aa).

Met1 carries the N-acetylmethionine modification. A disordered region spans residues 1-52 (MEDPGETEAHPLGATSLNFVPGYQQEEKPSPDPLYDTPDARGVQAGGSQQPA). Phosphoserine is present on Ser16. Position 35 is a phosphotyrosine; by ABL1 and ABL2 (Tyr35). An SH2 domain is found at 68–162 (WLQLRANAAA…ILLLPLPLPR (95 aa)). 2 disordered regions span residues 188–211 (LNTK…RSPQ) and 249–342 (STET…RPRH). 4 positions are modified to phosphoserine: Ser209, Ser257, Ser330, and Ser334. Residues 256-268 (LSPPAVPPPPVPV) show a composition bias toward pro residues. The span at 327-337 (SSGSPTTSPRL) shows a compositional bias: low complexity. Ser351 carries the phosphoserine; by PKD/PRKD1 modification. In terms of domain architecture, VPS9 spans 456–598 (LSTDGSLGRL…LSGLSQAHAL (143 aa)). The residue at position 609 (Ser609) is a Phosphoserine. The region spanning 624-706 (FQHLLRVAYQ…GYLIYRRAER (83 aa)) is the Ras-associating domain. Position 692 is an omega-N-methylarginine (Arg692). Positions 704–766 (AERPETQRAA…GHMQLEEQKA (63 aa)) are enriched in basic and acidic residues. The tract at residues 704–774 (AERPETQRAA…KAEGCPALEE (71 aa)) is disordered.

It belongs to the RIN (Ras interaction/interference) family. As to quaternary structure, interacts with the GTP-bound form of Ras proteins (NRAS, HRAS and KRAS). This interaction prevents the association between RAF1 and Ras. Interacts with 14-3-3 proteins YWHAB, YWHAE and YWHAZ when phosphorylated on Ser-351. Interacts with the SH3 domain of ABL1 and ABL2. Interacts with RAB5A. The interaction with Ras is probably regulated and antagonized by the interaction with 14-3-3 proteins. The interaction with 14-3-3 proteins is regulated by phosphorylation on Ser-351. Phosphorylated on tyrosine residues by ABL1 and ABL2. Phosphorylation at Ser-351 by PRKD1 induces interaction with 14-3-3 proteins.

Its subcellular location is the cytoplasm. It localises to the membrane. The protein resides in the cytoskeleton. Ras effector protein, which may serve as an inhibitory modulator of neuronal plasticity in aversive memory formation. Can affect Ras signaling at different levels. First, by competing with RAF1 protein for binding to activated Ras. Second, by enhancing signaling from ABL1 and ABL2, which regulate cytoskeletal remodeling. Third, by activating RAB5A, possibly by functioning as a guanine nucleotide exchange factor (GEF) for RAB5A, by exchanging bound GDP for free GTP, and facilitating Ras-activated receptor endocytosis. In Rattus norvegicus (Rat), this protein is Ras and Rab interactor 1 (Rin1).